Consider the following 159-residue polypeptide: 2-C-methyl-D-erythritol 2,4-cyclodiphosphate synthase (159 aa).

The a divalent metal cation site is built by Asp8 and His10. 4-CDP-2-C-methyl-D-erythritol 2-phosphate contacts are provided by residues 8 to 10 (DVH) and 34 to 35 (HS). Position 42 (His42) interacts with a divalent metal cation. Residues 56–58 (DIG), 61–65 (FPDTD), 132–135 (TTTE), Phe139, and Arg142 each bind 4-CDP-2-C-methyl-D-erythritol 2-phosphate.

This sequence belongs to the IspF family. In terms of assembly, homotrimer. The cofactor is a divalent metal cation.

It catalyses the reaction 4-CDP-2-C-methyl-D-erythritol 2-phosphate = 2-C-methyl-D-erythritol 2,4-cyclic diphosphate + CMP. It participates in isoprenoid biosynthesis; isopentenyl diphosphate biosynthesis via DXP pathway; isopentenyl diphosphate from 1-deoxy-D-xylulose 5-phosphate: step 4/6. Its function is as follows. Involved in the biosynthesis of isopentenyl diphosphate (IPP) and dimethylallyl diphosphate (DMAPP), two major building blocks of isoprenoid compounds. Catalyzes the conversion of 4-diphosphocytidyl-2-C-methyl-D-erythritol 2-phosphate (CDP-ME2P) to 2-C-methyl-D-erythritol 2,4-cyclodiphosphate (ME-CPP) with a corresponding release of cytidine 5-monophosphate (CMP). This Finegoldia magna (strain ATCC 29328 / DSM 20472 / WAL 2508) (Peptostreptococcus magnus) protein is 2-C-methyl-D-erythritol 2,4-cyclodiphosphate synthase.